We begin with the raw amino-acid sequence, 227 residues long: MGRGKIVIQKIDDSTSRQVTFSKRRKGLIKKAKELAILCDAEVCLIIFSNTDKLYDFASSSVKSTIERFNTAKMEEQELMNPASEVKFWQREAETLRQELHSLQENYRQLTGVELNGLSVKELQNIESQLEMSLRGIRMKREQILTNEIKELTRKRNLVHHENLELSRKVQRIHQENVELYKKAYGTSNTNGLGHHELVDAVYESHAQVRLQLSQPEQSHYKTSSNS.

In terms of domain architecture, MADS-box spans Arg-3–Phe-57. One can recognise a K-box domain in the interval Val-86–Glu-176.

Preferentially expressed in roots.

Its subcellular location is the nucleus. Its function is as follows. Probable transcription factor. The sequence is that of Agamous-like MADS-box protein AGL17 (AGL17) from Arabidopsis thaliana (Mouse-ear cress).